The chain runs to 233 residues: MAAPIAVALDAPDVETASRWAAAVAPHVSTLKVGLELYLRYGPAVVEAVRGARETALFLDLKLHDIPATVAGAARSVAGLAPAFLTVHAAGGADMVRAAVEAAPETRIAAVTVLTSLDEAALGAVGMRGPARDAVRRLAVLAVEAGARALVCSPQEAAMVRAEVGPDVTLITPGVRPAGAAQGDQARVATPEAALAAGADLLVIGRPITRAPDPGAAAAALAAELQKTGASPS.

Substrate-binding positions include aspartate 10, lysine 32, 60–69 (DLKLHDIPAT), threonine 115, arginine 176, glutamine 185, glycine 205, and arginine 206. Lysine 62 acts as the Proton donor in catalysis.

It belongs to the OMP decarboxylase family. Type 1 subfamily. In terms of assembly, homodimer.

The catalysed reaction is orotidine 5'-phosphate + H(+) = UMP + CO2. It functions in the pathway pyrimidine metabolism; UMP biosynthesis via de novo pathway; UMP from orotate: step 2/2. Functionally, catalyzes the decarboxylation of orotidine 5'-monophosphate (OMP) to uridine 5'-monophosphate (UMP). The sequence is that of Orotidine 5'-phosphate decarboxylase from Thermobifida fusca (strain YX).